Reading from the N-terminus, the 318-residue chain is Malonyl-S-ACP:biotin-protein carboxyltransferase MADC (318 aa).

A CoA carboxyltransferase N-terminal domain is found at 2–257; the sequence is AKWTELQDKS…VLQKPMEEIE (256 aa).

It is found in the cytoplasm. It carries out the reaction N(6)-biotinyl-L-lysyl-[protein] + malonyl-[ACP] = N(6)-carboxybiotinyl-L-lysyl-[protein] + acetyl-[ACP]. Functionally, gamma subunit of the biotin-dependent malonate decarboxylase multienzyme complex (EC 7.2.4.4). The two subunits MADC and MADD are required for the transfer of the malonate carboxy group from the acyl-carrier protein (ACP) to the prosthetic group of the biotin carrier MADF. Required for the regeneration of ACP. The polypeptide is Malonyl-S-ACP:biotin-protein carboxyltransferase MADC (madC) (Malonomonas rubra).